Reading from the N-terminus, the 417-residue chain is Carboxypeptidase A2 (417 aa).

The first 16 residues, 1-16 (MRLTLLLAALLGYIYC), serve as a signal peptide directing secretion. The propeptide at 17-112 (QETFVGDQVL…EMLFNQQRER (96 aa)) is activation peptide. One can recognise a Peptidase M14 domain in the interval 120–412 (AYHTLEEIYQ…LGLKTIMEHV (293 aa)). Zn(2+) is bound by residues His-177 and Glu-180. Substrate is bound by residues 177-180 (HARE), Arg-235, and 252-253 (NR). Cys-246 and Cys-269 are disulfide-bonded. His-304 lines the Zn(2+) pocket. 305-306 (SY) contributes to the substrate binding site. The cysteines at positions 318 and 352 are disulfide-linked. Tyr-356 contributes to the substrate binding site. Catalysis depends on Glu-378, which acts as the Proton donor/acceptor.

Belongs to the peptidase M14 family. Requires Zn(2+) as cofactor.

The protein resides in the secreted. It catalyses the reaction Similar to that of carboxypeptidase A (EC 3.4.17.1), but with a preference for bulkier C-terminal residues.. Carboxypeptidase that catalyzes the release of a C-terminal amino acid, with a preference for large aromatic C-terminal residues. The chain is Carboxypeptidase A2 (Cpa2) from Rattus norvegicus (Rat).